A 274-amino-acid chain; its full sequence is tRNA-cytidine(32) 2-sulfurtransferase (274 aa).

The short motif at 40–45 is the PP-loop motif element; it reads SGGKDS. [4Fe-4S] cluster-binding residues include cysteine 115, cysteine 118, and cysteine 206.

Belongs to the TtcA family. Homodimer. It depends on Mg(2+) as a cofactor. The cofactor is [4Fe-4S] cluster.

The protein localises to the cytoplasm. The enzyme catalyses cytidine(32) in tRNA + S-sulfanyl-L-cysteinyl-[cysteine desulfurase] + AH2 + ATP = 2-thiocytidine(32) in tRNA + L-cysteinyl-[cysteine desulfurase] + A + AMP + diphosphate + H(+). Its pathway is tRNA modification. In terms of biological role, catalyzes the ATP-dependent 2-thiolation of cytidine in position 32 of tRNA, to form 2-thiocytidine (s(2)C32). The sulfur atoms are provided by the cysteine/cysteine desulfurase (IscS) system. The protein is tRNA-cytidine(32) 2-sulfurtransferase of Pseudomonas paraeruginosa (strain DSM 24068 / PA7) (Pseudomonas aeruginosa (strain PA7)).